A 493-amino-acid polypeptide reads, in one-letter code: Cyclin-dependent kinase-like 2 (493 aa).

The Protein kinase domain maps to 4-287; sequence YENLGLVGEG…CAELLHHDFF (284 aa). Residues 10 to 18 and Lys33 contribute to the ATP site; that span reads VGEGSYGMV. A [NKR]KIAxRE motif is present at residues 45 to 51; it reads KKIAMRE. Asp126 serves as the catalytic Proton acceptor. Disordered regions lie at residues 311–338 and 363–384; these read VSLSKKSQNRKKEKEKDDSLGEERKTLV and GEKAEKGSRASNASCLHDSRTS. A compositionally biased stretch (basic and acidic residues) spans 320–336; the sequence is RKKEKEKDDSLGEERKT.

Belongs to the protein kinase superfamily. CMGC Ser/Thr protein kinase family. CDC2/CDKX subfamily.

It is found in the cytoplasm. The protein localises to the nucleus. It carries out the reaction L-seryl-[protein] + ATP = O-phospho-L-seryl-[protein] + ADP + H(+). It catalyses the reaction L-threonyl-[protein] + ATP = O-phospho-L-threonyl-[protein] + ADP + H(+). The protein is Cyclin-dependent kinase-like 2 of Pongo abelii (Sumatran orangutan).